The primary structure comprises 284 residues: NADPH-dependent 7-cyano-7-deazaguanine reductase (284 aa).

91–93 is a binding site for substrate; it reads IES. 93-94 lines the NADPH pocket; the sequence is SK. C192 serves as the catalytic Thioimide intermediate. D199 acts as the Proton donor in catalysis. 231 to 232 is a substrate binding site; it reads HE. 260–261 contacts NADPH; sequence RG.

It belongs to the GTP cyclohydrolase I family. QueF type 2 subfamily. In terms of assembly, homodimer.

The protein resides in the cytoplasm. The enzyme catalyses 7-aminomethyl-7-carbaguanine + 2 NADP(+) = 7-cyano-7-deazaguanine + 2 NADPH + 3 H(+). It functions in the pathway tRNA modification; tRNA-queuosine biosynthesis. Functionally, catalyzes the NADPH-dependent reduction of 7-cyano-7-deazaguanine (preQ0) to 7-aminomethyl-7-deazaguanine (preQ1). The polypeptide is NADPH-dependent 7-cyano-7-deazaguanine reductase (Shewanella denitrificans (strain OS217 / ATCC BAA-1090 / DSM 15013)).